A 274-amino-acid chain; its full sequence is Ribosomal RNA small subunit methyltransferase A (274 aa).

Positions 15, 17, 42, 64, 89, and 108 each coordinate S-adenosyl-L-methionine.

This sequence belongs to the class I-like SAM-binding methyltransferase superfamily. rRNA adenine N(6)-methyltransferase family. RsmA subfamily.

Its subcellular location is the cytoplasm. It catalyses the reaction adenosine(1518)/adenosine(1519) in 16S rRNA + 4 S-adenosyl-L-methionine = N(6)-dimethyladenosine(1518)/N(6)-dimethyladenosine(1519) in 16S rRNA + 4 S-adenosyl-L-homocysteine + 4 H(+). Specifically dimethylates two adjacent adenosines (A1518 and A1519) in the loop of a conserved hairpin near the 3'-end of 16S rRNA in the 30S particle. May play a critical role in biogenesis of 30S subunits. This chain is Ribosomal RNA small subunit methyltransferase A, found in Prochlorococcus marinus (strain AS9601).